Reading from the N-terminus, the 218-residue chain is Small ribosomal subunit protein uS3 (218 aa).

The KH type-2 domain maps to Ile-38 to Lys-106.

This sequence belongs to the universal ribosomal protein uS3 family. As to quaternary structure, part of the 30S ribosomal subunit. Forms a tight complex with proteins S10 and S14.

In terms of biological role, binds the lower part of the 30S subunit head. Binds mRNA in the 70S ribosome, positioning it for translation. This chain is Small ribosomal subunit protein uS3, found in Bacillus velezensis (strain DSM 23117 / BGSC 10A6 / LMG 26770 / FZB42) (Bacillus amyloliquefaciens subsp. plantarum).